Reading from the N-terminus, the 240-residue chain is Ribonuclease PH (240 aa).

Phosphate contacts are provided by residues R87 and 125–127; that span reads GTR.

This sequence belongs to the RNase PH family. As to quaternary structure, homohexameric ring arranged as a trimer of dimers.

The catalysed reaction is tRNA(n+1) + phosphate = tRNA(n) + a ribonucleoside 5'-diphosphate. Phosphorolytic 3'-5' exoribonuclease that plays an important role in tRNA 3'-end maturation. Removes nucleotide residues following the 3'-CCA terminus of tRNAs; can also add nucleotides to the ends of RNA molecules by using nucleoside diphosphates as substrates, but this may not be physiologically important. Probably plays a role in initiation of 16S rRNA degradation (leading to ribosome degradation) during starvation. In Stutzerimonas stutzeri (strain A1501) (Pseudomonas stutzeri), this protein is Ribonuclease PH.